The primary structure comprises 1094 residues: Formin-like protein 1 (1094 aa).

Disordered regions lie at residues 1 to 29 (MGNAAGSAEQPAGPTASPPKQPAVPKQPM), 173 to 199 (SGAEKSKPLDQSVEDLSKAPPSSVPKS), and 507 to 627 (AATP…GVKA). The N-myristoyl glycine moiety is linked to residue G2. S7 is modified (phosphoserine). The segment covering 16–28 (ASPPKQPAVPKQP) has biased composition (pro residues). Positions 27-464 (QPMPAAGELE…SRRIPEPEKV (438 aa)) constitute a GBD/FH3 domain. S184 is subject to Phosphoserine. Positions 519–529 (RVSTDSPSTAE) are enriched in polar residues. 2 stretches are compositionally biased toward pro residues: residues 535–549 (ASPPPPPPPPPPPLP) and 559–610 (PSAP…PGGP). In terms of domain architecture, FH2 spans 627 to 1018 (AKKPIQTKFR…DTSGREEPPT (392 aa)). S688 bears the Phosphoserine mark. Over residues 1002–1017 (WKKEAAADTSGREEPP) the composition is skewed to basic and acidic residues. Residues 1002 to 1094 (WKKEAAADTS…PLPVTTDLAL (93 aa)) are disordered. Residue S1021 is modified to Phosphoserine. Residues 1049 to 1082 (SDRDGAIEDIITDLRNQPYIRADTGRRSARRRPP) enclose the DAD domain.

The protein belongs to the formin homology family. Interacts with RAC1, PFN1 and PFN2. Interacts (activated by RAC1) with SRGAP2 (via SH3 domain); regulates the actin filament severing activity of FMNL1. Myristoylation mediates membrane localization. In terms of tissue distribution, highly expressed in the spleen, lymph node and bone marrow cells.

It localises to the cytoplasm. The protein resides in the cell membrane. Its subcellular location is the cytoplasmic vesicle. The protein localises to the phagosome. Its function is as follows. Plays a role in the regulation of cell morphology and cytoskeletal organization. Required in the cortical actin filament dynamics and cell shape. May play a role in the control of cell motility and survival of macrophages. The sequence is that of Formin-like protein 1 (Fmnl1) from Mus musculus (Mouse).